The chain runs to 142 residues: Large ribosomal subunit protein uL11 (142 aa).

Belongs to the universal ribosomal protein uL11 family. As to quaternary structure, part of the ribosomal stalk of the 50S ribosomal subunit. Interacts with L10 and the large rRNA to form the base of the stalk. L10 forms an elongated spine to which L12 dimers bind in a sequential fashion forming a multimeric L10(L12)X complex. Post-translationally, one or more lysine residues are methylated.

Functionally, forms part of the ribosomal stalk which helps the ribosome interact with GTP-bound translation factors. The protein is Large ribosomal subunit protein uL11 of Haemophilus influenzae (strain PittGG).